A 411-amino-acid chain; its full sequence is Adenylosuccinate synthetase (411 aa).

GTP-binding positions include 11 to 17 (GDEGKGK) and 39 to 41 (GHT). Aspartate 12 functions as the Proton acceptor in the catalytic mechanism. Residues aspartate 12 and glycine 39 each contribute to the Mg(2+) site. Residues 12-15 (DEGK), 37-40 (NAGH), threonine 121, arginine 135, glutamine 215, threonine 230, and arginine 294 each bind IMP. Histidine 40 (proton donor) is an active-site residue. 290-296 (TTTKRPR) is a substrate binding site. GTP-binding positions include arginine 296, 322 to 324 (KLD), and 400 to 402 (STS).

This sequence belongs to the adenylosuccinate synthetase family. As to quaternary structure, homodimer. Requires Mg(2+) as cofactor.

The protein resides in the cytoplasm. The enzyme catalyses IMP + L-aspartate + GTP = N(6)-(1,2-dicarboxyethyl)-AMP + GDP + phosphate + 2 H(+). It participates in purine metabolism; AMP biosynthesis via de novo pathway; AMP from IMP: step 1/2. Its function is as follows. Plays an important role in the de novo pathway of purine nucleotide biosynthesis. Catalyzes the first committed step in the biosynthesis of AMP from IMP. This Helicobacter pylori (strain G27) protein is Adenylosuccinate synthetase.